The chain runs to 86 residues: Small ribosomal subunit protein uS17 (86 aa).

Belongs to the universal ribosomal protein uS17 family. In terms of assembly, part of the 30S ribosomal subunit.

Functionally, one of the primary rRNA binding proteins, it binds specifically to the 5'-end of 16S ribosomal RNA. The sequence is that of Small ribosomal subunit protein uS17 from Streptococcus pyogenes serotype M6 (strain ATCC BAA-946 / MGAS10394).